We begin with the raw amino-acid sequence, 412 residues long: UV DNA damage endonuclease (412 aa).

This sequence belongs to the uve1/UvsE family.

Functionally, component in a DNA repair pathway. Removal of UV LIGHT damaged nucleotides. Recognizes pyrimidine dimers and cleave a phosphodiester bond immediately 5' to the lesion. This Clostridium perfringens (strain 13 / Type A) protein is UV DNA damage endonuclease.